We begin with the raw amino-acid sequence, 317 residues long: Phosphopantothenate--cysteine ligase 1 (317 aa).

The protein belongs to the PPC synthetase family. Homodimer.

It carries out the reaction (R)-4'-phosphopantothenate + L-cysteine + ATP = N-[(R)-4-phosphopantothenoyl]-L-cysteine + AMP + diphosphate + H(+). The protein operates within cofactor biosynthesis; coenzyme A biosynthesis; CoA from (R)-pantothenate: step 2/5. Functionally, catalyzes the first step in the biosynthesis of coenzyme A from vitamin B5/pantothenate, where cysteine is conjugated to 4'-phosphopantothenate to form 4-phosphopantothenoylcysteine. The catalytic activity is not CTP- but ATP-dependent. The polypeptide is Phosphopantothenate--cysteine ligase 1 (PPCS1) (Arabidopsis thaliana (Mouse-ear cress)).